Here is a 387-residue protein sequence, read N- to C-terminus: UDP-N-acetylglucosamine--N-acetylmuramyl-(pentapeptide) pyrophosphoryl-undecaprenol N-acetylglucosamine transferase (387 aa).

The interval 1-22 (MSEHVRSAGPPQASTAPSGGSA) is disordered. Residues 41 to 43 (TGG), asparagine 158, arginine 194, serine 222, isoleucine 276, and glutamine 321 contribute to the UDP-N-acetyl-alpha-D-glucosamine site.

Belongs to the glycosyltransferase 28 family. MurG subfamily.

Its subcellular location is the cell inner membrane. It carries out the reaction di-trans,octa-cis-undecaprenyl diphospho-N-acetyl-alpha-D-muramoyl-L-alanyl-D-glutamyl-meso-2,6-diaminopimeloyl-D-alanyl-D-alanine + UDP-N-acetyl-alpha-D-glucosamine = di-trans,octa-cis-undecaprenyl diphospho-[N-acetyl-alpha-D-glucosaminyl-(1-&gt;4)]-N-acetyl-alpha-D-muramoyl-L-alanyl-D-glutamyl-meso-2,6-diaminopimeloyl-D-alanyl-D-alanine + UDP + H(+). Its pathway is cell wall biogenesis; peptidoglycan biosynthesis. Functionally, cell wall formation. Catalyzes the transfer of a GlcNAc subunit on undecaprenyl-pyrophosphoryl-MurNAc-pentapeptide (lipid intermediate I) to form undecaprenyl-pyrophosphoryl-MurNAc-(pentapeptide)GlcNAc (lipid intermediate II). This chain is UDP-N-acetylglucosamine--N-acetylmuramyl-(pentapeptide) pyrophosphoryl-undecaprenol N-acetylglucosamine transferase, found in Polaromonas sp. (strain JS666 / ATCC BAA-500).